The sequence spans 515 residues: Glucose-6-phosphate 1-dehydrogenase X (515 aa).

Position 2 is an N-acetylalanine (alanine 2). NADP(+) contacts are provided by residues 38–45 (GASGDLAK), arginine 72, tyrosine 147, and lysine 171. Residues lysine 171, 201 to 205 (HYLGK), glutamate 239, and aspartate 258 contribute to the D-glucose 6-phosphate site. Histidine 263 acts as the Proton acceptor in catalysis. Arginine 357 provides a ligand contact to NADP(+). The D-glucose 6-phosphate site is built by lysine 360 and arginine 365. NADP(+) contacts are provided by lysine 366, arginine 370, and arginine 393. Glutamine 395 lines the D-glucose 6-phosphate pocket. Residues 401 to 403 (YTK), 421 to 423 (DLT), arginine 487, and tyrosine 503 contribute to the NADP(+) site. Phosphotyrosine is present on tyrosine 507. Position 509 (tryptophan 509) interacts with NADP(+).

It belongs to the glucose-6-phosphate dehydrogenase family. In terms of assembly, homotetramer; dimer of dimers. Interacts with SIRT2; the interaction is enhanced by H(2)O(2) treatment. Forms a ternary complex with ALDOB and TP53; this interaction is direct. ALDOB stabilizes the complex inhibiting G6PD activity and keeping oxidative pentose phosphate metabolism in check. Post-translationally, acetylated by ELP3 at Lys-403; acetylation inhibits its homodimerization and enzyme activity. Deacetylated by SIRT2 at Lys-403; deacetylation stimulates its enzyme activity.

It localises to the cytoplasm. It is found in the cytosol. The protein resides in the membrane. The catalysed reaction is D-glucose 6-phosphate + NADP(+) = 6-phospho-D-glucono-1,5-lactone + NADPH + H(+). The protein operates within carbohydrate degradation; pentose phosphate pathway; D-ribulose 5-phosphate from D-glucose 6-phosphate (oxidative stage): step 1/3. Catalyzes the rate-limiting step of the oxidative pentose-phosphate pathway, which represents a route for the dissimilation of carbohydrates besides glycolysis. The main function of this enzyme is to provide reducing power (NADPH) and pentose phosphates for fatty acid and nucleic acid synthesis. This Mus musculus (Mouse) protein is Glucose-6-phosphate 1-dehydrogenase X (G6pdx).